The chain runs to 197 residues: Holliday junction branch migration complex subunit RuvA (197 aa).

The domain I stretch occupies residues 1–64 (MYEYIKGKYI…EDFIGVYGFL (64 aa)). The tract at residues 65–143 (TKDELSMFKL…IDILEEDDEQ (79 aa)) is domain II. Positions 144–148 (TINKV) are flexible linker. The tract at residues 149–197 (TDDKKVLEAVAALITLGYSEKEANKVINSCDKNNSLEQIIKEALKYLMK) is domain III.

It belongs to the RuvA family. In terms of assembly, homotetramer. Forms an RuvA(8)-RuvB(12)-Holliday junction (HJ) complex. HJ DNA is sandwiched between 2 RuvA tetramers; dsDNA enters through RuvA and exits via RuvB. An RuvB hexamer assembles on each DNA strand where it exits the tetramer. Each RuvB hexamer is contacted by two RuvA subunits (via domain III) on 2 adjacent RuvB subunits; this complex drives branch migration. In the full resolvosome a probable DNA-RuvA(4)-RuvB(12)-RuvC(2) complex forms which resolves the HJ.

The protein resides in the cytoplasm. The RuvA-RuvB-RuvC complex processes Holliday junction (HJ) DNA during genetic recombination and DNA repair, while the RuvA-RuvB complex plays an important role in the rescue of blocked DNA replication forks via replication fork reversal (RFR). RuvA specifically binds to HJ cruciform DNA, conferring on it an open structure. The RuvB hexamer acts as an ATP-dependent pump, pulling dsDNA into and through the RuvAB complex. HJ branch migration allows RuvC to scan DNA until it finds its consensus sequence, where it cleaves and resolves the cruciform DNA. The polypeptide is Holliday junction branch migration complex subunit RuvA (Clostridium botulinum (strain 657 / Type Ba4)).